Consider the following 271-residue polypeptide: S-adenosylmethionine decarboxylase proenzyme (271 aa).

The Schiff-base intermediate with substrate; via pyruvic acid role is filled by Ser121. Ser121 carries the pyruvic acid (Ser); by autocatalysis modification. His126 acts as the Proton acceptor; for processing activity in catalysis. Cys149 (proton donor; for catalytic activity) is an active-site residue.

Belongs to the prokaryotic AdoMetDC family. Type 2 subfamily. As to quaternary structure, heterooctamer of four alpha and four beta chains arranged as a tetramer of alpha/beta heterodimers. Requires pyruvate as cofactor. Is synthesized initially as an inactive proenzyme. Formation of the active enzyme involves a self-maturation process in which the active site pyruvoyl group is generated from an internal serine residue via an autocatalytic post-translational modification. Two non-identical subunits are generated from the proenzyme in this reaction, and the pyruvate is formed at the N-terminus of the alpha chain, which is derived from the carboxyl end of the proenzyme. The post-translation cleavage follows an unusual pathway, termed non-hydrolytic serinolysis, in which the side chain hydroxyl group of the serine supplies its oxygen atom to form the C-terminus of the beta chain, while the remainder of the serine residue undergoes an oxidative deamination to produce ammonia and the pyruvoyl group blocking the N-terminus of the alpha chain.

It catalyses the reaction S-adenosyl-L-methionine + H(+) = S-adenosyl 3-(methylsulfanyl)propylamine + CO2. It participates in amine and polyamine biosynthesis; S-adenosylmethioninamine biosynthesis; S-adenosylmethioninamine from S-adenosyl-L-methionine: step 1/1. Functionally, catalyzes the decarboxylation of S-adenosylmethionine to S-adenosylmethioninamine (dcAdoMet), the propylamine donor required for the synthesis of the polyamines spermine and spermidine from the diamine putrescine. This is S-adenosylmethionine decarboxylase proenzyme from Clostridium beijerinckii (strain ATCC 51743 / NCIMB 8052) (Clostridium acetobutylicum).